A 566-amino-acid polypeptide reads, in one-letter code: Mediator of RNA polymerase II transcription subunit 1 (566 aa).

Serine 155 bears the Phosphoserine mark. The segment at 361–425 is disordered; that stretch reads TPSSNSNSSE…TNKSKRPSIT (65 aa). Positions 410 to 421 are enriched in basic residues; that stretch reads RRRRSSTNKSKR. Serine 423 is modified (phosphoserine).

It belongs to the Mediator complex subunit 1 family. As to quaternary structure, component of the Mediator complex, which is composed of at least 21 subunits that form three structurally distinct submodules. The Mediator head module contains MED6, MED8, MED11, SRB4/MED17, SRB5/MED18, ROX3/MED19, SRB2/MED20 and SRB6/MED22, the middle module contains MED1, MED4, NUT1/MED5, MED7, CSE2/MED9, NUT2/MED10, SRB7/MED21 and SOH1/MED31, and the tail module contains MED2, PGD1/MED3, RGR1/MED14, GAL11/MED15 and SIN4/MED16. The head and the middle modules interact directly with RNA polymerase II, whereas the elongated tail module interacts with gene-specific regulatory proteins. MED1 interacts directly with MED4 and MED7.

The protein resides in the nucleus. Functionally, component of the Mediator complex, a coactivator involved in the regulated transcription of nearly all RNA polymerase II-dependent genes. Mediator functions as a bridge to convey information from gene-specific regulatory proteins to the basal RNA polymerase II transcription machinery. The Mediator complex, having a compact conformation in its free form, is recruited to promoters by direct interactions with regulatory proteins and serves for the assembly of a functional preinitiation complex with RNA polymerase II and the general transcription factors. The Mediator complex unfolds to an extended conformation and partially surrounds RNA polymerase II, specifically interacting with the unphosphorylated form of the C-terminal domain (CTD) of RNA polymerase II. The Mediator complex dissociates from the RNA polymerase II holoenzyme and stays at the promoter when transcriptional elongation begins. In Saccharomyces cerevisiae (strain ATCC 204508 / S288c) (Baker's yeast), this protein is Mediator of RNA polymerase II transcription subunit 1 (MED1).